The primary structure comprises 436 residues: UPF0229 protein mll9637 (436 aa).

The tract at residues 54–103 (IPRKGTGEPTFGDDKESGRRQHILPGNRTFSSGDLIPKPGGGGGYGSAAG) is disordered.

This sequence belongs to the UPF0229 family.

The protein is UPF0229 protein mll9637 of Mesorhizobium japonicum (strain LMG 29417 / CECT 9101 / MAFF 303099) (Mesorhizobium loti (strain MAFF 303099)).